The chain runs to 177 residues: Secretion monitor (177 aa).

Positions methionine 1 to glycine 37 are cleaved as a signal peptide.

This sequence belongs to the SecM family.

It is found in the cytoplasm. The protein resides in the cytosol. The protein localises to the periplasm. Functionally, regulates secA expression by translational coupling of the secM secA operon. Translational pausing at a specific Pro residue 5 residues before the end of the protein may allow disruption of a mRNA repressor helix that normally suppresses secA translation initiation. This Yersinia pestis bv. Antiqua (strain Antiqua) protein is Secretion monitor.